Reading from the N-terminus, the 507-residue chain is Photosystem II CP47 reaction center protein (507 aa).

Over 2–16 the chain is Cytoplasmic; sequence GLPWYRVHTVVLNDP. Residues 17–39 traverse the membrane as a helical segment; it reads GRLISVHLMHTALVAGWAGSMAL. Over 40–94 the chain is Lumenal, thylakoid; it reads YELAIFDSSDAVLNPMWRQGMFVLPFMARLGVTSSWNGWSVTGETGLDPGFWSFE. The helical transmembrane segment at 95-116 threads the bilayer; sequence GVAAAHIVLSGLLFLAAVWHWV. Residues 117 to 134 are Cytoplasmic-facing; the sequence is FWDLELFVDPRTGESALD. Residues 135–159 traverse the membrane as a helical segment; the sequence is LPKMFGIHLFLSGLLCFGFGAFHLT. The Lumenal, thylakoid segment spans residues 160-196; it reads GVWGPGMWVSDPYGLTGHVQPVAPEWGPAGFNPFNPG. A helical membrane pass occupies residues 197–218; it reads GVVAHHIAAGIVGIIAGLFHLT. Topologically, residues 219-233 are cytoplasmic; it reads VRPPERLYKALRMGN. Residues 234–255 traverse the membrane as a helical segment; it reads IETVLSSSIAAVFFAAFVVAGT. At 256-450 the chain is on the lumenal, thylakoid side; the sequence is MWYGNATTPI…GVFRTSPRGW (195 aa). A helical membrane pass occupies residues 451–474; sequence FTFGHAVFALLFFFGHIWHGSRTL. The Cytoplasmic portion of the chain corresponds to 475–507; the sequence is FRDVFAGVDPGLEEQVEFGVFAKVGDLSTRKEA.

It belongs to the PsbB/PsbC family. PsbB subfamily. As to quaternary structure, PSII is composed of 1 copy each of membrane proteins PsbA, PsbB, PsbC, PsbD, PsbE, PsbF, PsbH, PsbI, PsbJ, PsbK, PsbL, PsbM, PsbT, PsbX, Psb30/Ycf12, peripheral proteins PsbO, CyanoQ (PsbQ), PsbU, PsbV and a large number of cofactors. It forms dimeric complexes. Contacts PsbQ. The cofactor is Binds multiple chlorophylls. PSII binds additional chlorophylls, carotenoids and specific lipids..

Its subcellular location is the cellular thylakoid membrane. Functionally, one of the components of the core complex of photosystem II (PSII). It binds chlorophyll and helps catalyze the primary light-induced photochemical processes of PSII. PSII is a light-driven water:plastoquinone oxidoreductase, using light energy to abstract electrons from H(2)O, generating O(2) and a proton gradient subsequently used for ATP formation. This chain is Photosystem II CP47 reaction center protein, found in Synechocystis sp. (strain ATCC 27184 / PCC 6803 / Kazusa).